Here is a 406-residue protein sequence, read N- to C-terminus: Glutamyl-tRNA reductase (406 aa).

Substrate-binding positions include 50–53, Ser107, 112–114, and Gln118; these read TCNR and EPQ. Cys51 (nucleophile) is an active-site residue. 187 to 192 provides a ligand contact to NADP(+); sequence GAGEMG.

This sequence belongs to the glutamyl-tRNA reductase family. Homodimer.

The catalysed reaction is (S)-4-amino-5-oxopentanoate + tRNA(Glu) + NADP(+) = L-glutamyl-tRNA(Glu) + NADPH + H(+). Its pathway is porphyrin-containing compound metabolism; protoporphyrin-IX biosynthesis; 5-aminolevulinate from L-glutamyl-tRNA(Glu): step 1/2. Functionally, catalyzes the NADPH-dependent reduction of glutamyl-tRNA(Glu) to glutamate 1-semialdehyde (GSA). In Aquifex aeolicus (strain VF5), this protein is Glutamyl-tRNA reductase.